Here is a 99-residue protein sequence, read N- to C-terminus: Protein translation factor SUI1 homolog (99 aa).

The protein belongs to the SUI1 family.

This is Protein translation factor SUI1 homolog from Sulfolobus acidocaldarius (strain ATCC 33909 / DSM 639 / JCM 8929 / NBRC 15157 / NCIMB 11770).